The following is a 253-amino-acid chain: Small ribosomal subunit protein uS3 (253 aa).

One can recognise a KH type-2 domain in the interval 39 to 107 (VRRALKKRLY…EVHLNIVEIR (69 aa)). Residues 215–253 (LDKRLAGESGPAGEGGGRERGDRPDRGPRRERRGEPSNA) form a disordered region. Residues 230 to 253 (GGRERGDRPDRGPRRERRGEPSNA) show a composition bias toward basic and acidic residues.

The protein belongs to the universal ribosomal protein uS3 family. In terms of assembly, part of the 30S ribosomal subunit. Forms a tight complex with proteins S10 and S14.

In terms of biological role, binds the lower part of the 30S subunit head. Binds mRNA in the 70S ribosome, positioning it for translation. This chain is Small ribosomal subunit protein uS3, found in Phenylobacterium zucineum (strain HLK1).